Here is a 226-residue protein sequence, read N- to C-terminus: UPF0758 protein SGO_1229 (226 aa).

Positions 103–225 (RILSSQKLAK…YYSYREETDL (123 aa)) constitute an MPN domain. The Zn(2+) site is built by histidine 174, histidine 176, and aspartate 187. Positions 174 to 187 (HNHPSGATRPSRDD) match the JAMM motif motif.

It belongs to the UPF0758 family.

This is UPF0758 protein SGO_1229 from Streptococcus gordonii (strain Challis / ATCC 35105 / BCRC 15272 / CH1 / DL1 / V288).